The primary structure comprises 109 residues: Protein FAM32A-like (109 aa).

A disordered region spans residues 1–48 (MSEYKSVQKGSLKLKGVSLPSKKKKKKNKEMKRLEEQVLTSENEEGTK). A compositionally biased stretch (low complexity) spans 9–20 (KGSLKLKGVSLP). A compositionally biased stretch (basic residues) spans 21–30 (SKKKKKKNKE).

Belongs to the FAM32 family.

The protein resides in the nucleus. Functionally, may induce G2 arrest and apoptosis. May also increase cell sensitivity to apoptotic stimuli. This is Protein FAM32A-like (fam32al) from Danio rerio (Zebrafish).